A 405-amino-acid chain; its full sequence is Multidrug resistance protein MdtA (405 aa).

The signal sequence occupies residues 1–22 (MKTPRRFPLIALTVAAVLTAAA). Residues 35–52 (VQNRQGTEQQRASNSQGS) show a composition bias toward polar residues. The interval 35–62 (VQNRQGTEQQRASNSQGSAKRAGNAPPV) is disordered.

This sequence belongs to the membrane fusion protein (MFP) (TC 8.A.1) family. As to quaternary structure, part of a tripartite efflux system composed of MdtA, MdtB and MdtC.

It localises to the cell inner membrane. In Erwinia amylovora (strain ATCC 49946 / CCPPB 0273 / Ea273 / 27-3), this protein is Multidrug resistance protein MdtA.